A 326-amino-acid chain; its full sequence is DNA-directed RNA polymerase subunit alpha (326 aa).

The segment at 1 to 231 is alpha N-terminal domain (alpha-NTD); sequence MQSNALLKPR…DQLSVFADLE (231 aa). The tract at residues 245–326 is alpha C-terminal domain (alpha-CTD); that stretch reads IDPVLLRPVD…WPPAGLEKLG (82 aa).

The protein belongs to the RNA polymerase alpha chain family. As to quaternary structure, homodimer. The RNAP catalytic core consists of 2 alpha, 1 beta, 1 beta' and 1 omega subunit. When a sigma factor is associated with the core the holoenzyme is formed, which can initiate transcription.

It catalyses the reaction RNA(n) + a ribonucleoside 5'-triphosphate = RNA(n+1) + diphosphate. Functionally, DNA-dependent RNA polymerase catalyzes the transcription of DNA into RNA using the four ribonucleoside triphosphates as substrates. The chain is DNA-directed RNA polymerase subunit alpha from Azoarcus sp. (strain BH72).